The primary structure comprises 159 residues: Globin CTT-W (159 aa).

An N-terminal signal peptide occupies residues 1-16; it reads MKFLVILTLCIAGAIA. Positions 17–159 constitute a Globin domain; sequence HCDKAPFIKA…HHAIVYSILE (143 aa). Heme b-binding residues include histidine 73 and histidine 108.

This sequence belongs to the globin family.

The protein is Globin CTT-W (CTT-W) of Chironomus thummi thummi (Midge).